Reading from the N-terminus, the 257-residue chain is Ubiquinone biosynthesis O-methyltransferase (257 aa).

Residues Arg-43, Gly-77, Asp-98, and Met-144 each contribute to the S-adenosyl-L-methionine site.

Belongs to the methyltransferase superfamily. UbiG/COQ3 family.

It carries out the reaction a 3-demethylubiquinol + S-adenosyl-L-methionine = a ubiquinol + S-adenosyl-L-homocysteine + H(+). The enzyme catalyses a 3-(all-trans-polyprenyl)benzene-1,2-diol + S-adenosyl-L-methionine = a 2-methoxy-6-(all-trans-polyprenyl)phenol + S-adenosyl-L-homocysteine + H(+). Its pathway is cofactor biosynthesis; ubiquinone biosynthesis. O-methyltransferase that catalyzes the 2 O-methylation steps in the ubiquinone biosynthetic pathway. This Psychrobacter arcticus (strain DSM 17307 / VKM B-2377 / 273-4) protein is Ubiquinone biosynthesis O-methyltransferase.